The chain runs to 586 residues: MVSGKIVKIAGPVVVAEGMKGAQMYEVVKVGNEGLTGEIIQLESDKAVIQVYEETAGIVPGEPVEGTGAPLSAELGPGMLKAMYDGIQRPLTAIEDATKSIYIPRGVSVPSISREAKWDFTPTVNVGDKVEAGDIIGTVPETKSIVHKIMIPNGISGTIKEIKSGSFTVVEPIAIVETENGEEKEIIMMQKWPVRNPRPYKEKLPPEIPLVTGQRLEDTFFGLAKGGASAIPGPFGSGKTVTQHQLAKWSDADIVVYIGCGERGNEMTEVIEEFPHLDDLKTGNKLMDRTVLIANTSNMPVAAREASVYTGITIAEYFRDMGYGVLLTADSTSRWAEAMREISGRLEEMPGEEGYPAYLSSRLAQFYERAGRVACMGHDEKQGFVCIVGAVSPPGGDFSEPVTSNTLRIVKVFWALDANLARRRHFPAINWLQSYSLYLDDIEDWWKENTAEDWREIRDEAMNLLQKEAELQEIVQLVGPDALPDKERVILEVSRMLREDFLQQDAFSDIDSYCSPMKQYTMLKTIMTFYSKAILAVEKGADPADIAKVSVKQDVAKMKYTPEEEFLNKLAPAIVEKISKELDALV.

Position 233–240 (233–240) interacts with ATP; the sequence is GPFGSGKT.

This sequence belongs to the ATPase alpha/beta chains family. As to quaternary structure, has multiple subunits with at least A(3), B(3), C, D, E, F, H, I and proteolipid K(x).

The protein localises to the cell membrane. It catalyses the reaction ATP + H2O + 4 H(+)(in) = ADP + phosphate + 5 H(+)(out). Functionally, component of the A-type ATP synthase that produces ATP from ADP in the presence of a proton gradient across the membrane. The A chain is the catalytic subunit. This Methanococcus aeolicus (strain ATCC BAA-1280 / DSM 17508 / OCM 812 / Nankai-3) protein is A-type ATP synthase subunit A.